A 243-amino-acid polypeptide reads, in one-letter code: Thiocyanate hydrolase subunit gamma (243 aa).

The Co(3+) site is built by C128, C131, S132, and C133. Residue C131 is modified to Cysteine sulfinic acid (-SO2H). C133 carries the cysteine sulfenic acid (-SOH) modification.

The protein belongs to the nitrile hydratase subunit alpha family. In terms of assembly, heterododecamer consisting of 4 alpha, 4 beta, and 4 gamma subunits. Requires Co(3+) as cofactor.

It catalyses the reaction thiocyanate + H2O + 2 H(+) = carbonyl sulfide + NH4(+). The protein operates within organosulfur degradation; thiocyanate degradation. Involved in the degradation of thiocyanate. The chain is Thiocyanate hydrolase subunit gamma (scnC) from Thiobacillus thioparus.